A 182-amino-acid chain; its full sequence is Early nodulin-like protein 14 (182 aa).

A signal peptide spans 1–28 (MFLSASMASSSLHVAIFSLIFLFSLAAA). The Phytocyanin domain occupies 29 to 133 (NEVTVGGKSG…GQKLSLVVIS (105 aa)). A disulfide bond links C87 and C121. N-linked (GlcNAc...) asparagine glycans are attached at residues N88 and N95. S160 is lipidated: GPI-anchor amidated serine. Positions 161 to 182 (GSVRLGGCYVVLGLVLGLCAWF) are cleaved as a propeptide — removed in mature form.

This sequence belongs to the early nodulin-like (ENODL) family. In terms of assembly, interacts strongly and specifically with the extracellular domain of FERONIA at the synergid cell surface. Mostly expressed in seedlings and flowers, and, to a lower extent, in roots, stems and seeds, but barely in leaves.

It localises to the cell membrane. Functionally, may act as a carbohydrate transporter. Required, together with ENODL11, ENODL12, ENODL13, ENODL14 and ENODL15, for male-female communication and pollen tube reception and burst at the synergid cell surface of the female gametophyte. This is Early nodulin-like protein 14 from Arabidopsis thaliana (Mouse-ear cress).